The sequence spans 203 residues: A-type ATP synthase subunit E (203 aa).

Belongs to the V-ATPase E subunit family. In terms of assembly, has multiple subunits with at least A(3), B(3), C, D, E, F, H, I and proteolipid K(x).

Its subcellular location is the cell membrane. In terms of biological role, component of the A-type ATP synthase that produces ATP from ADP in the presence of a proton gradient across the membrane. This chain is A-type ATP synthase subunit E, found in Thermococcus kodakarensis (strain ATCC BAA-918 / JCM 12380 / KOD1) (Pyrococcus kodakaraensis (strain KOD1)).